The sequence spans 295 residues: Nitrogenase iron protein (295 aa).

11–18 (GKGGIGKS) contributes to the ATP binding site. Cys99 is a [4Fe-4S] cluster binding site. Arg102 carries the ADP-ribosylarginine; by dinitrogenase reductase ADP-ribosyltransferase modification. Cys133 contributes to the [4Fe-4S] cluster binding site.

This sequence belongs to the NifH/BchL/ChlL family. In terms of assembly, homodimer. [4Fe-4S] cluster serves as cofactor. Post-translationally, the reversible ADP-ribosylation of Arg-102 inactivates the nitrogenase reductase and regulates nitrogenase activity.

The catalysed reaction is N2 + 8 reduced [2Fe-2S]-[ferredoxin] + 16 ATP + 16 H2O = H2 + 8 oxidized [2Fe-2S]-[ferredoxin] + 2 NH4(+) + 16 ADP + 16 phosphate + 6 H(+). The key enzymatic reactions in nitrogen fixation are catalyzed by the nitrogenase complex, which has 2 components: the iron protein and the molybdenum-iron protein. In Zymomonas mobilis subsp. mobilis (strain ATCC 31821 / ZM4 / CP4), this protein is Nitrogenase iron protein.